We begin with the raw amino-acid sequence, 166 residues long: MFPMVTEFMNYGQQTVRAARYIGQGFMITLSHANRLPVTIQYPYEKLITSERFRGRIHFEFDKCIACEVCVRVCPIDLPVVDWKLETDIRKKRLLNYSIDFGICIFCGNCVEYCPTNCLSMTEEYELSTYDRHELNYNQIALGRLPMSIMDDYTIRTIFNLPEIKT.

4Fe-4S ferredoxin-type domains follow at residues 55-84 (GRIH…VDWK) and 95-124 (LNYS…MTEE). [4Fe-4S] cluster is bound by residues cysteine 64, cysteine 67, cysteine 70, cysteine 74, cysteine 104, cysteine 107, cysteine 110, and cysteine 114.

It belongs to the complex I 23 kDa subunit family. In terms of assembly, NDH is composed of at least 16 different subunits, 5 of which are encoded in the nucleus. Requires [4Fe-4S] cluster as cofactor.

It localises to the plastid. It is found in the chloroplast thylakoid membrane. It catalyses the reaction a plastoquinone + NADH + (n+1) H(+)(in) = a plastoquinol + NAD(+) + n H(+)(out). The enzyme catalyses a plastoquinone + NADPH + (n+1) H(+)(in) = a plastoquinol + NADP(+) + n H(+)(out). Its function is as follows. NDH shuttles electrons from NAD(P)H:plastoquinone, via FMN and iron-sulfur (Fe-S) centers, to quinones in the photosynthetic chain and possibly in a chloroplast respiratory chain. The immediate electron acceptor for the enzyme in this species is believed to be plastoquinone. Couples the redox reaction to proton translocation, and thus conserves the redox energy in a proton gradient. This chain is NAD(P)H-quinone oxidoreductase subunit I, chloroplastic, found in Silphium perfoliatum (Cup plant).